Here is a 228-residue protein sequence, read N- to C-terminus: Protein GrpE (228 aa).

Disordered regions lie at residues Met1 to Ala31 and Gly209 to Gly228.

It belongs to the GrpE family. In terms of assembly, homodimer.

The protein resides in the cytoplasm. Functionally, participates actively in the response to hyperosmotic and heat shock by preventing the aggregation of stress-denatured proteins, in association with DnaK and GrpE. It is the nucleotide exchange factor for DnaK and may function as a thermosensor. Unfolded proteins bind initially to DnaJ; upon interaction with the DnaJ-bound protein, DnaK hydrolyzes its bound ATP, resulting in the formation of a stable complex. GrpE releases ADP from DnaK; ATP binding to DnaK triggers the release of the substrate protein, thus completing the reaction cycle. Several rounds of ATP-dependent interactions between DnaJ, DnaK and GrpE are required for fully efficient folding. This chain is Protein GrpE, found in Brucella anthropi (strain ATCC 49188 / DSM 6882 / CCUG 24695 / JCM 21032 / LMG 3331 / NBRC 15819 / NCTC 12168 / Alc 37) (Ochrobactrum anthropi).